The primary structure comprises 288 residues: Hemin import ATP-binding protein HmuV (288 aa).

The region spanning 31–269 is the ABC transporter domain; the sequence is LRARGLVVER…DLLTRVYQHP (239 aa). 68-75 lines the ATP pocket; the sequence is GPNGAGKS.

This sequence belongs to the ABC transporter superfamily. Heme (hemin) importer (TC 3.A.1.14.5) family. As to quaternary structure, the complex is composed of two ATP-binding proteins (HmuV), two transmembrane proteins (HmuU) and a solute-binding protein (HmuT).

The protein localises to the cell membrane. Its function is as follows. Part of the ABC transporter complex HmuTUV involved in hemin import. Responsible for energy coupling to the transport system. The chain is Hemin import ATP-binding protein HmuV from Nocardia farcinica (strain IFM 10152).